A 50-amino-acid polypeptide reads, in one-letter code: Sperm protamine P1 (50 aa).

2 cysteine pairs are disulfide-bonded: Cys-7–Cys-15 and Cys-39–Cys-47.

Belongs to the protamine P1 family. In terms of assembly, cross-linked by interchain disulfide bonds around the DNA-helix. Testis.

The protein resides in the nucleus. It localises to the chromosome. Functionally, protamines substitute for histones in the chromatin of sperm during the haploid phase of spermatogenesis. They compact sperm DNA into a highly condensed, stable and inactive complex. The sequence is that of Sperm protamine P1 (PRM1) from Oryctolagus cuniculus (Rabbit).